Reading from the N-terminus, the 745-residue chain is MAWGWWRRWRRWPARRWRRRRRRRPLRRRRAGRPARRYRRRRTVRTRRRRWGRRRYRRGWRRRTYVRKGRHRKKKKRLILRQWQPATRRRCTITGYLPIVFCGHTKGNKNYALHSDDYTPQGQPFGGALSTTSFSLKVLFDQHQRGLNKWSFPNDQLDLARYRGCKFIFYRTKQTDWIGQYDISEPYKLDKYSCPNYHPGNLIKAKHKFLIPSYDTNPRGRQKIIVKIPPPDLFVDKWYTQEDLCSVNLVSLAVSAASFLHPFGSPQTDNPCYTFQVLKEFYYQAIGFSATDESRNYVFNVLYEENSYWESNITPFYVINVKKGSNTXDYMSPXISDSHFRNKVNTNYNWYTYNAKSHKNDLHXLRRAYFKQLTTEGPQQTSSEKGYASQWTTPTTDAYEYHLGMFSTIFLAPDRPVPRFPCAYQDVTYNPLMDKGVGNHVWFQYNTKADTQLIVTGGSCKAHIEDIPLWAAFYGYSDFIESELGPFVDAETVGLICVICPYTKPPMYNKTNPMMGYVFYDRNFGDGKWIDGRGKIEPYWQVRWRPEMLFQETVMADIVQTGPFSYKDELKNSTLVAKYKFYFTWGGNMMFQQTIKNPCKTDGRPTDSDRHPRGIQVADPEQMGPRWVFHSFDWRRGYLSEGAIKRLHEKPLDYESYFTQPKRPRIFPPTEAAEGEFREPEKGSYSEEERSQASAEEQATEETVLLLKRRLREQRKLEQQLQFLTREMFKTQAGLHINPMLLSQR.

3 disordered regions span residues 23-44 (RRPLRRRRAGRPARRYRRRRTV), 598-619 (PCKTDGRPTDSDRHPRGIQVAD), and 660-700 (QPKR…EQAT). Basic and acidic residues-rich tracts occupy residues 599 to 612 (CKTDGRPTDSDRHP) and 675 to 691 (GEFREPEKGSYSEEERS).

It belongs to the anelloviridae capsid protein family.

It localises to the virion. Its function is as follows. Self assemble to form an icosahedral capsid. The sequence is that of Capsid protein from Homo sapiens (Human).